Reading from the N-terminus, the 713-residue chain is MMQESVTETISNSSMNQNGMSTLSSQLDAGSRDGRSSGDTSSEVSTVELLHLQQQQALQAARQLLLQQQTSGLKSPKSSDKQRPLQVPVSVAMMTPQVITPQQMQQILQQQVLSPQQLQALLQQQQAVMLQQQQLQEFYKKQQEQLHLQLLQQQQQQQQQQQQQQQQQQQQQQQQQQQQQQQQQQQQQQQHPGKQAKEQQQQQQQQQLAAQQLVFQQQLLQMQQLQQQQHLLSLQRQGLISIPPGQAALPVQSLPQAGLSPAEIQQLWKEVTGVHSMEDNGIKHGGLDLTTNNSSSTTSSTTSKASPPITHHSIVNGQSSVLNARRDSSSHEETGASHTLYGHGVCKWPGCESICEDFGQFLKHLNNEHALDDRSTAQCRVQMQVVQQLEIQLSKERERLQAMMTHLHMRPSEPKPSPKPLNLVSSVTMSKNMLETSPQSLPQTPTTPTAPVTPITQGPSVITPASVPNVGAIRRRHSDKYNIPMSSEIAPNYEFYKNADVRPPFTYATLIRQAIMESSDRQLTLNEIYSWFTRTFAYFRRNAATWKNAVRHNLSLHKCFVRVENVKGAVWTVDEVEYQKRRSQKITGSPTLVKNIPTSLGYGAALNASLQAALAESSLPLLSNPGLINNASSGLLQAVHEDLNGSLDHIDSNGNSSPGCSPQPHIHSIHVKEEPVIAEDEDCPMSLVTTANHSPELEDDREIEEEPLSEDLE.

Residues 1 to 28 (MMQESVTETISNSSMNQNGMSTLSSQLD) show a composition bias toward polar residues. Disordered stretches follow at residues 1–44 (MMQE…SSEV) and 279–337 (DNGI…TGAS). The segment covering 290 to 303 (TTNNSSSTTSSTTS) has biased composition (low complexity). Residues 313 to 322 (SIVNGQSSVL) are compositionally biased toward polar residues. Residues 324–335 (ARRDSSSHEETG) show a composition bias toward basic and acidic residues. The C2H2-type zinc finger occupies 344–369 (GVCKWPGCESICEDFGQFLKHLNNEH). Residues 386–407 (VQQLEIQLSKERERLQAMMTHL) are leucine-zipper. Positions 420 to 424 (PLNLV) are CTBP1-binding. Residues 436–457 (TSPQSLPQTPTTPTAPVTPITQ) show a composition bias toward low complexity. A disordered region spans residues 436 to 463 (TSPQSLPQTPTTPTAPVTPITQGPSVIT). A DNA-binding region (fork-head) is located at residues 502-592 (RPPFTYATLI…SQKITGSPTL (91 aa)). Disordered regions lie at residues 647-666 (LDHI…QPHI) and 676-713 (VIAE…EDLE). A compositionally biased stretch (acidic residues) spans 697-713 (LEDDREIEEEPLSEDLE).

Forms homodimers and heterodimers with FOXP1 and FOXP4. Dimerization is required for DNA-binding. Interacts with CTBP1. Interacts with FOXP1. Interacts with TBR1. Interacts with ZMYM2.

It localises to the nucleus. Functionally, transcriptional repressor that may play a role in the specification and differentiation of lung epithelium. May also play a role in developing neural, gastrointestinal and cardiovascular tissues. Can act with CTBP1 to synergistically repress transcription but CTPBP1 is not essential. Plays a role in synapse formation by regulating SRPX2 levels. This is Forkhead box protein P2 (FOXP2) from Pongo pygmaeus (Bornean orangutan).